The chain runs to 264 residues: COP9 signalosome complex subunit 7b (264 aa).

Residue A2 is modified to N-acetylalanine. The PCI domain occupies 2–159; it reads AGEQKPSSNL…QLLEVDFCIG (158 aa). The stretch at 194 to 237 forms a coiled coil; sequence RANQYKENHSRTQQQVEAEVTNIKKTLKATASSSAQEMEQQLAE. Positions 223–232 are enriched in polar residues; the sequence is TASSSAQEME. The interval 223–264 is disordered; it reads TASSSAQEMEQQLAERECPPHAEQRQPTKKMSKVKGLVSSRH. Residues 235–248 show a composition bias toward basic and acidic residues; sequence LAERECPPHAEQRQ.

It belongs to the CSN7/EIF3M family. CSN7 subfamily. As to quaternary structure, component of the CSN complex, composed of COPS1/GPS1, COPS2, COPS3, COPS4, COPS5, COPS6, COPS7 (COPS7A or COPS7B), COPS8 and COPS9. In the complex, it probably interacts directly with COPS1, COPS2, COPS4, COPS5, COPS6 and COPS8. Interacts with EIF3S6.

It localises to the cytoplasm. The protein localises to the nucleus. In terms of biological role, component of the COP9 signalosome complex (CSN), a complex involved in various cellular and developmental processes. The CSN complex is an essential regulator of the ubiquitin (Ubl) conjugation pathway by mediating the deneddylation of the cullin subunits of SCF-type E3 ligase complexes, leading to decrease the Ubl ligase activity of SCF-type complexes such as SCF, CSA or DDB2. The complex is also involved in phosphorylation of p53/TP53, JUN, I-kappa-B-alpha/NFKBIA, ITPK1 and IRF8/ICSBP, possibly via its association with CK2 and PKD kinases. CSN-dependent phosphorylation of TP53 and JUN promotes and protects degradation by the Ubl system, respectively. This Bos taurus (Bovine) protein is COP9 signalosome complex subunit 7b (COPS7B).